Consider the following 606-residue polypeptide: Zinc finger protein 652 (606 aa).

At Ser57 the chain carries Phosphoserine. A compositionally biased stretch (basic and acidic residues) spans 71–97; the sequence is HLHETEEQPYFRETRAVSDVHAVKEDR. Disordered regions lie at residues 71 to 113 and 130 to 235; these read HLHE…VSYK and VSKG…APVQ. The span at 98-109 shows a compositional bias: acidic residues; sequence ENSDDTEEEEEE. Phosphoserine is present on Ser100. Residue Thr103 is modified to Phosphothreonine. Residues 137 to 149 show a composition bias toward polar residues; it reads VSSQSKETPVLKT. Residues 152-170 show a composition bias toward acidic residues; sequence EEEEEESEEEATDDSNDYG. The span at 171 to 183 shows a compositional bias: basic and acidic residues; sequence ENEKQKKKEKIVE. Residues 184–209 show a composition bias toward low complexity; sequence KVSVTQRRTRRAASVAAATTSPTPRT. A phosphoserine mark is found at Ser197 and Ser204. The C2H2-type 1 zinc finger occupies 245–268; the sequence is LTCEKCPRVFNTRWYLEKHMNVTH. A C2H2-type 2; degenerate zinc finger spans residues 272 to 294; it reads QICDKCGKKFVLESELSLHQQTD. 6 C2H2-type zinc fingers span residues 299–322, 329–351, 357–379, 385–407, 413–435, and 441–463; these read IQCVSCNKSFKKLWSLHEHIKIVH, FSCEICEKKFYTMAHVRKHMVAH, FTCETCGKSFKRSMSLKVHSLQH, FRCENCDERFQYKYQLRSHMSIH, FMCQWCGKDFNMKQYFDEHMKTH, and FICEICGKSFTSRPNMKRHRRTH. A C2H2-type 9; degenerate zinc finger spans residues 469–492; that stretch reads YPCDVCGQRFRFSNMLKAHKEKCF. The mediates interaction with CBFA2T3 stretch occupies residues 498-606; that stretch reads VNVPPAVQIP…AEKNSSAQHH (109 aa).

This sequence belongs to the krueppel C2H2-type zinc-finger protein family. As to quaternary structure, interacts with CBFA2T3. As to expression, widely expressed with higher expression in breast, prostate, vulva and pancreas.

It localises to the nucleus. In terms of biological role, functions as a transcriptional repressor. The chain is Zinc finger protein 652 (ZNF652) from Homo sapiens (Human).